Reading from the N-terminus, the 121-residue chain is Large ribosomal subunit protein bL21 (121 aa).

The protein belongs to the bacterial ribosomal protein bL21 family. As to quaternary structure, part of the 50S ribosomal subunit. Contacts protein L20.

Functionally, this protein binds to 23S rRNA in the presence of protein L20. The protein is Large ribosomal subunit protein bL21 of Synechococcus sp. (strain CC9605).